We begin with the raw amino-acid sequence, 150 residues long: Avidin-related protein 1 (150 aa).

The first 24 residues, 1 to 24, serve as a signal peptide directing secretion; it reads MVHATSPLLLLLLLSLALVAPGLS. The 122-residue stretch at 26–147 folds into the Avidin-like domain; that stretch reads RKCSLTGKWD…GNNDFTRQRT (122 aa). An intrachain disulfide couples cysteine 28 to cysteine 105. 2 residues coordinate biotin: asparagine 36 and serine 40. N-linked (GlcNAc...) asparagine glycosylation is present at asparagine 54. Residues tyrosine 57, threonine 59, and aspartate 63 each contribute to the biotin site. Residues asparagine 67 and asparagine 93 are each glycosylated (N-linked (GlcNAc...) asparagine). Serine 95, serine 99, and asparagine 140 together coordinate biotin.

The protein belongs to the avidin/streptavidin family. In terms of assembly, homotetramer. In terms of processing, glycosylated.

Its subcellular location is the secreted. Its function is as follows. Forms a strong non-covalent specific complex with biotin. The chain is Avidin-related protein 1 (AVR1) from Gallus gallus (Chicken).